Consider the following 600-residue polypeptide: Elongation factor 4 (600 aa).

One can recognise a tr-type G domain in the interval 5 to 187 (KYIRNFSIIA…AIVNKLPPPK (183 aa)). Residues 17 to 22 (DHGKST) and 134 to 137 (NKID) each bind GTP.

Belongs to the TRAFAC class translation factor GTPase superfamily. Classic translation factor GTPase family. LepA subfamily.

Its subcellular location is the cell inner membrane. It carries out the reaction GTP + H2O = GDP + phosphate + H(+). Functionally, required for accurate and efficient protein synthesis under certain stress conditions. May act as a fidelity factor of the translation reaction, by catalyzing a one-codon backward translocation of tRNAs on improperly translocated ribosomes. Back-translocation proceeds from a post-translocation (POST) complex to a pre-translocation (PRE) complex, thus giving elongation factor G a second chance to translocate the tRNAs correctly. Binds to ribosomes in a GTP-dependent manner. This is Elongation factor 4 from Rickettsia canadensis (strain McKiel).